Consider the following 298-residue polypeptide: MNHIQEAFLNTLKVERNFSEHTLKSYQDDLIQFNQFLEQEHLQLNTFEYRDARNYLSYLYLNHLKRTSVSRKISTLRTLYEYWMTLDENIINPFVHLVHPKKEKYLPQFSLEEEMEALFTTVEKDTSKNLRDRVILELLYATGIRVSELVNIKKQDIDFYANGVTVLGKGSKERFVPFGAYCRQSIENYLEHFKPIQSCNHDFLILNMKGEAITERGVRYVLNDIVKRTAGVSEIHPHKLRHTFATHLLNQGADLRTVQSLLGHVNLSTTGKYTHVSNQQLRKVYLNAHPRAKKENET.

A Core-binding (CB) domain is found at 1 to 84 (MNHIQEAFLN…TLRTLYEYWM (84 aa)). The region spanning 105-286 (YLPQFSLEEE…SNQQLRKVYL (182 aa)) is the Tyr recombinase domain. Residues arginine 145, lysine 169, histidine 238, arginine 241, and histidine 264 contribute to the active site. Residue tyrosine 273 is the O-(3'-phospho-DNA)-tyrosine intermediate of the active site.

It belongs to the 'phage' integrase family. XerC subfamily. In terms of assembly, forms a cyclic heterotetrameric complex composed of two molecules of XerC and two molecules of XerD.

It is found in the cytoplasm. Its function is as follows. Site-specific tyrosine recombinase, which acts by catalyzing the cutting and rejoining of the recombining DNA molecules. The XerC-XerD complex is essential to convert dimers of the bacterial chromosome into monomers to permit their segregation at cell division. It also contributes to the segregational stability of plasmids. This chain is Tyrosine recombinase XerC, found in Staphylococcus aureus.